Reading from the N-terminus, the 258-residue chain is Tryptophan synthase alpha chain (258 aa).

Active-site proton acceptor residues include Glu-44 and Asp-55.

It belongs to the TrpA family. Tetramer of two alpha and two beta chains.

It catalyses the reaction (1S,2R)-1-C-(indol-3-yl)glycerol 3-phosphate + L-serine = D-glyceraldehyde 3-phosphate + L-tryptophan + H2O. Its pathway is amino-acid biosynthesis; L-tryptophan biosynthesis; L-tryptophan from chorismate: step 5/5. Functionally, the alpha subunit is responsible for the aldol cleavage of indoleglycerol phosphate to indole and glyceraldehyde 3-phosphate. This is Tryptophan synthase alpha chain from Petrotoga mobilis (strain DSM 10674 / SJ95).